The following is an 83-amino-acid chain: Aspergillic acid biosynthesis cluster protein F (83 aa).

The protein operates within secondary metabolite biosynthesis. Its function is as follows. Part of the gene cluster that mediates the biosynthesis of aspergillic acid, a hydroxamic acid-containing pyrazinone with aliphatic side chains that originates from leucine (Leu) and isoleucine (Ile). Aspergillic acid has antibiotic properties and was shown to be lethal to mice. The first step in the pathway is the production of deoxyaspergillic acid via a condensation between the Ile amine and the Leu carboxylic acid, followed by a reductive release from the protein forming the dipeptide aldehyde NH(2)-Leu-Ile-CHO, which could undergo an intermolecular cyclization resulting in a dihydropyrazinone. As the NRPS asaC lacks a condensation domain, it is improbable that it is responsible for condensation of Leu and Ile. One possibility is that asaC acts on a previously condensed dipeptide and functions as a Leu-Ile reductase to yield deoxyaspergillic acid. After asaC forms deoxyaspergillic acid, the cytochrome P450 asaD oxidizes the pyrazinone to the hydroxamic acid-containing bioactive metabolite aspergillic acid. The hydroxylase/desaturase asaB can then convert aspergillic acid to hydroxyaspergillic acid. Both aspergillic acid and hydroxyaspergillic acid can form complexes with iron producing ferriaspergillin analogs. The protein is Aspergillic acid biosynthesis cluster protein F of Aspergillus flavus (strain ATCC 200026 / FGSC A1120 / IAM 13836 / NRRL 3357 / JCM 12722 / SRRC 167).